Reading from the N-terminus, the 154-residue chain is MYYYLITLAVIALDQLTKWFVVQNMEIGQKIEVIPGFLYWTSYRNDGAAWSILEGHMWFFYLITVIVIGIIIYIMQKYAKGKRLFSISLAFILGGAIGNFIDRVLHQEVVDFVQTVWGNYYFPIFNVADASLSVGVVLMLVYVFVDDRKTKGIK.

Helical transmembrane passes span 55 to 75 (GHMWFFYLITVIVIGIIIYIM) and 84 to 104 (LFSISLAFILGGAIGNFIDRV). Catalysis depends on residues Asp111 and Asp129. A helical transmembrane segment spans residues 124–144 (IFNVADASLSVGVVLMLVYVF).

The protein belongs to the peptidase A8 family.

It is found in the cell membrane. The catalysed reaction is Release of signal peptides from bacterial membrane prolipoproteins. Hydrolyzes -Xaa-Yaa-Zaa-|-(S,diacylglyceryl)Cys-, in which Xaa is hydrophobic (preferably Leu), and Yaa (Ala or Ser) and Zaa (Gly or Ala) have small, neutral side chains.. Its pathway is protein modification; lipoprotein biosynthesis (signal peptide cleavage). Functionally, this protein specifically catalyzes the removal of signal peptides from prolipoproteins. This is Lipoprotein signal peptidase from Listeria welshimeri serovar 6b (strain ATCC 35897 / DSM 20650 / CCUG 15529 / CIP 8149 / NCTC 11857 / SLCC 5334 / V8).